The following is a 443-amino-acid chain: MTRLAKGKWRSTLGAMMALAVMVAAIPQARAELVIDITRGVREPMPIAIPVFGGTDAQSSAMGRDVVGVVSNDLQGSGLFRVLDPAAYIQSLPNLAVQPQFADWRAINAQALVQGEVQPQGDGRLRVAFRLWDVFSGQQVVGRAFLTQGDNWRRVSHIIADEIYKAITGEEGYFDTRVVYVAETGPKTNRVKKLAIMDQDGANQRNLTNGESMVLTPRFSPTAQEITYLSYYNSVPRVYLFNIETGRRELLGDFPGMTFAPRFSPDGNKVIMSMALDGNTEIYEMDLRTRRSSRLTNHPSIDTSPSYAPDGRQITFNSDRGGAQQIYVMNADGSGVQRISFGDGRYATPVWSPRGDLIAFTKLKGGRFFIGAMRPDGSGEKILTEGFLVEGPTWAPNGRVLMFFRQDPNGRTTLHSIDVTGYNERQISTPTEASDPAWSPLLP.

Residues methionine 1–alanine 31 form the signal peptide. Over residues asparagine 423–glutamate 432 the composition is skewed to polar residues. The interval asparagine 423–proline 443 is disordered.

This sequence belongs to the TolB family. As to quaternary structure, the Tol-Pal system is composed of five core proteins: the inner membrane proteins TolA, TolQ and TolR, the periplasmic protein TolB and the outer membrane protein Pal. They form a network linking the inner and outer membranes and the peptidoglycan layer.

It localises to the periplasm. Its function is as follows. Part of the Tol-Pal system, which plays a role in outer membrane invagination during cell division and is important for maintaining outer membrane integrity. This chain is Tol-Pal system protein TolB, found in Rhodospirillum rubrum (strain ATCC 11170 / ATH 1.1.1 / DSM 467 / LMG 4362 / NCIMB 8255 / S1).